The sequence spans 274 residues: Orotidine 5'-phosphate decarboxylase (274 aa).

The active-site Proton donor is Lys-95.

This sequence belongs to the OMP decarboxylase family. Type 2 subfamily.

It carries out the reaction orotidine 5'-phosphate + H(+) = UMP + CO2. The protein operates within pyrimidine metabolism; UMP biosynthesis via de novo pathway; UMP from orotate: step 2/2. The sequence is that of Orotidine 5'-phosphate decarboxylase from Verminephrobacter eiseniae (strain EF01-2).